The chain runs to 118 residues: uncharacterized protein (118 aa).

This is an uncharacterized protein from Methanocaldococcus jannaschii (strain ATCC 43067 / DSM 2661 / JAL-1 / JCM 10045 / NBRC 100440) (Methanococcus jannaschii).